A 232-amino-acid polypeptide reads, in one-letter code: Enolase-phosphatase E1 (232 aa).

The protein belongs to the HAD-like hydrolase superfamily. MasA/MtnC family. Monomer. The cofactor is Mg(2+).

The enzyme catalyses 5-methylsulfanyl-2,3-dioxopentyl phosphate + H2O = 1,2-dihydroxy-5-(methylsulfanyl)pent-1-en-3-one + phosphate. It functions in the pathway amino-acid biosynthesis; L-methionine biosynthesis via salvage pathway; L-methionine from S-methyl-5-thio-alpha-D-ribose 1-phosphate: step 3/6. The protein operates within amino-acid biosynthesis; L-methionine biosynthesis via salvage pathway; L-methionine from S-methyl-5-thio-alpha-D-ribose 1-phosphate: step 4/6. In terms of biological role, bifunctional enzyme that catalyzes the enolization of 2,3-diketo-5-methylthiopentyl-1-phosphate (DK-MTP-1-P) into the intermediate 2-hydroxy-3-keto-5-methylthiopentenyl-1-phosphate (HK-MTPenyl-1-P), which is then dephosphorylated to form the acireductone 1,2-dihydroxy-3-keto-5-methylthiopentene (DHK-MTPene). The chain is Enolase-phosphatase E1 from Xanthomonas campestris pv. campestris (strain 8004).